The following is an 862-amino-acid chain: Rab GTPase-binding effector protein 1 (862 aa).

Alanine 2 carries the post-translational modification N-acetylalanine. Residues 11-328 (DVSLQQRVAE…KDQEEDEQQR (318 aa)) are a coiled coil. Lysine 282 carries the post-translational modification N6-acetyllysine. Disordered regions lie at residues 315–340 (ELKKKDQEEDEQQRINKGKDNKKIDT) and 355–374 (EESSTPLSNEEEHLDSTHGS). Residues serine 374, serine 377, and serine 407 each carry the phosphoserine modification. A Phosphothreonine modification is found at threonine 408. Residue serine 410 is modified to Phosphoserine. Residues 534 to 816 (DMCSNYEKQL…LQTELDVSEQ (283 aa)) are a coiled coil.

The protein belongs to the rabaptin family. Heterodimer with RABGEF1. The heterodimer binds RAB4A and RAB5A that have been activated by GTP-binding. Interacts with TSC2. Interacts with GGA1 (via GAE domain), GGA2 (via GAE domain) and GGA3 (via GAE domain). Interacts with AP1G1 (via GAE domain). Interacts with AP1G2 (via GAE domain). Interacts with ECPAS. Interacts with KCNH1. Interacts with PKD1 (via C-terminal domain) and GGA1; the interactions recruit PKD1:PKD2 complex to GGA1 and ARL3 at trans-Golgi network. Interacts with KCNH1. Proteolytic cleavage by caspases in apoptotic cells causes loss of endosome fusion activity.

Its subcellular location is the cytoplasm. The protein resides in the early endosome. It is found in the recycling endosome. It localises to the cytoplasmic vesicle. In terms of biological role, rab effector protein acting as linker between gamma-adaptin, RAB4A and RAB5A. Involved in endocytic membrane fusion and membrane trafficking of recycling endosomes. Involved in KCNH1 channels trafficking to and from the cell membrane. Stimulates RABGEF1 mediated nucleotide exchange on RAB5A. Mediates the traffic of PKD1:PKD2 complex from the endoplasmic reticulum through the Golgi to the cilium. The polypeptide is Rab GTPase-binding effector protein 1 (Rabep1) (Rattus norvegicus (Rat)).